Consider the following 252-residue polypeptide: Probable truncated L-gulonolactone oxidase 7, mitochondrial (252 aa).

The N-terminal 102 residues, 1-102, are a transit peptide targeting the mitochondrion; that stretch reads MKRSMRSHLA…ELNYGVLVRY (102 aa).

It belongs to the oxygen-dependent FAD-linked oxidoreductase family.

Its subcellular location is the mitochondrion. It carries out the reaction L-gulono-1,4-lactone + O2 = L-ascorbate + H2O2 + H(+). The protein operates within cofactor biosynthesis; L-ascorbate biosynthesis. Functionally, may be involved in the biosynthesis of ascorbic acid. This chain is Probable truncated L-gulonolactone oxidase 7, mitochondrial, found in Arabidopsis thaliana (Mouse-ear cress).